Here is a 3994-residue protein sequence, read N- to C-terminus: Hybrid PKS-NRPs synthetase opdA (3994 aa).

The 437-residue stretch at Pro-6–Ser-442 folds into the Ketosynthase family 3 (KS3) domain. Catalysis depends on for beta-ketoacyl synthase activity residues Cys-179, His-316, and His-362. The tract at residues Val-559–Ala-881 is malonyl-CoA:ACP transacylase (MAT) domain. Positions His-951 to Thr-1085 are N-terminal hotdog fold. The dehydratase (DH) domain stretch occupies residues His-951–Ala-1251. A PKS/mFAS DH domain is found at His-951–Glu-1252. The active-site Proton acceptor; for dehydratase activity is the His-983. The tract at residues Leu-1100–Glu-1252 is C-terminal hotdog fold. The active-site Proton donor; for dehydratase activity is Asp-1159. A methyltransferase (MT) domain region spans residues Asp-1292–Asp-1593. The interval Thr-2123 to Thr-2297 is ketoreductase (KR) domain. The 78-residue stretch at Glu-2406–Leu-2483 folds into the Carrier 1 domain. The residue at position 2443 (Ser-2443) is an O-(pantetheine 4'-phosphoryl)serine. The disordered stretch occupies residues Gln-2486–Pro-2575. Polar residues-rich tracts occupy residues Leu-2505–Thr-2514 and Thr-2522–Asp-2546. Basic and acidic residues predominate over residues Thr-2547–Ile-2556. Over residues Ser-2557–Asp-2570 the composition is skewed to acidic residues. The interval Arg-2582 to Ile-3007 is condensation (C) domain. The interval His-3043–Leu-3436 is adenylation (A) (KR) domain. The 78-residue stretch at Pro-3553–Arg-3630 folds into the Carrier 2 domain. Ser-3590 is modified (O-(pantetheine 4'-phosphoryl)serine). The interval Thr-3679 to Ala-3895 is reductase (RED) domain.

The protein in the C-terminal section; belongs to the NRP synthetase family. Pantetheine 4'-phosphate is required as a cofactor.

The protein operates within secondary metabolite biosynthesis. In terms of biological role, hybrid PKS-NRPS synthetase; part of the gene cluster that mediates the biosynthesis of oxopyrrolidines, polyketide-amino acid hybrid compounds with feature structures of tetramic acid. The polyketide chain is first assembled by the highly reducing PKS module of opdA using acetyl-CoA as the starter unit and five malonyl-CoA as the extender units. OpdC acts as trans-acting enoyl reductase and reduces the terminal alkenyl to alkane. The 17R in oxopyrrolidine A and 15R, 17S in oxopyrrolidine B are generated by non-stereospecific catalysis of the ketoreductase (KR) domain and enoyl reductases. Then the polyketides with specific configurations are transferred to the NRPS module of opdA and linked to L-tyrosine to form an amide bond. Finally, the oxopyrrolidines are offloaded through a Dieckmann cyclization catalyzed by the terminal D domain to give a tetramic acid moiety. In Penicillium oxalicum (strain 114-2 / CGMCC 5302) (Penicillium decumbens), this protein is Hybrid PKS-NRPs synthetase opdA.